The chain runs to 127 residues: Histone H2A (127 aa).

Basic residues predominate over residues 1-20 (MSGRGKGGKAKTGGKAKSRS). The tract at residues 1 to 23 (MSGRGKGGKAKTGGKAKSRSSRA) is disordered. An N-acetylserine modification is found at S2. Position 2 is a phosphoserine (S2). An N6-acetyllysine; partial mark is found at K6, K9, and K11. Q106 is subject to N5-methylglutamine. Residue K121 forms a Glycyl lysine isopeptide (Lys-Gly) (interchain with G-Cter in ubiquitin) linkage.

The protein belongs to the histone H2A family. The nucleosome is a histone octamer containing two molecules each of H2A, H2B, H3 and H4 assembled in one H3-H4 heterotetramer and two H2A-H2B heterodimers. The octamer wraps approximately 147 bp of DNA. In terms of processing, monoubiquitination of Lys-121 gives a specific tag for epigenetic transcriptional repression. Phosphorylation on Ser-2 is enhanced during mitosis. Phosphorylation on Ser-2 directly represses transcription.

It is found in the nucleus. Its subcellular location is the chromosome. Functionally, core component of nucleosome. Nucleosomes wrap and compact DNA into chromatin, limiting DNA accessibility to the cellular machineries which require DNA as a template. Histones thereby play a central role in transcription regulation, DNA repair, DNA replication and chromosomal stability. DNA accessibility is regulated via a complex set of post-translational modifications of histones, also called histone code, and nucleosome remodeling. This Caenorhabditis elegans protein is Histone H2A (his-3).